A 133-amino-acid chain; its full sequence is UPF0292 protein TGAM_1777 (133 aa).

Residues 20 to 100 (EGALIVEGLR…RVDVETRREL (81 aa)) form the Toprim domain. Mg(2+) is bound by residues Glu26, Asp69, and Asp71.

The protein belongs to the UPF0292 family. Mg(2+) serves as cofactor.

This is UPF0292 protein TGAM_1777 from Thermococcus gammatolerans (strain DSM 15229 / JCM 11827 / EJ3).